The sequence spans 226 residues: 7-cyano-7-deazaguanine synthase (226 aa).

Residue 10-20 participates in ATP binding; sequence LSGGLDSATAA. Residues cysteine 191, cysteine 199, cysteine 202, and cysteine 205 each contribute to the Zn(2+) site.

It belongs to the QueC family. Zn(2+) is required as a cofactor.

The enzyme catalyses 7-carboxy-7-deazaguanine + NH4(+) + ATP = 7-cyano-7-deazaguanine + ADP + phosphate + H2O + H(+). Its pathway is purine metabolism; 7-cyano-7-deazaguanine biosynthesis. Functionally, catalyzes the ATP-dependent conversion of 7-carboxy-7-deazaguanine (CDG) to 7-cyano-7-deazaguanine (preQ(0)). This Synechococcus sp. (strain CC9311) protein is 7-cyano-7-deazaguanine synthase.